Reading from the N-terminus, the 288-residue chain is Fatty acid-binding protein TM_1468 (288 aa).

One can recognise a DegV domain in the interval 3-283; the sequence is VKILVDSTAD…PGTVGFGIEV (281 aa). Residues threonine 63 and serine 96 each coordinate hexadecanoate.

Monomer.

Functionally, binds long-chain fatty acids, such as palmitate, and may play a role in lipid transport or fatty acid metabolism. The protein is Fatty acid-binding protein TM_1468 of Thermotoga maritima (strain ATCC 43589 / DSM 3109 / JCM 10099 / NBRC 100826 / MSB8).